A 444-amino-acid polypeptide reads, in one-letter code: UDP-N-acetylglucosamine 1-carboxyvinyltransferase (444 aa).

Residue 22–23 participates in phosphoenolpyruvate binding; sequence KN. R94 contacts UDP-N-acetyl-alpha-D-glucosamine. D119 serves as the catalytic Proton donor. Residues D309 and V331 each contribute to the UDP-N-acetyl-alpha-D-glucosamine site.

The protein belongs to the EPSP synthase family. MurA subfamily.

The protein resides in the cytoplasm. It carries out the reaction phosphoenolpyruvate + UDP-N-acetyl-alpha-D-glucosamine = UDP-N-acetyl-3-O-(1-carboxyvinyl)-alpha-D-glucosamine + phosphate. The protein operates within cell wall biogenesis; peptidoglycan biosynthesis. In terms of biological role, cell wall formation. Adds enolpyruvyl to UDP-N-acetylglucosamine. The sequence is that of UDP-N-acetylglucosamine 1-carboxyvinyltransferase from Chlamydia abortus (strain DSM 27085 / S26/3) (Chlamydophila abortus).